The chain runs to 247 residues: Sugar fermentation stimulation protein homolog (247 aa).

Belongs to the SfsA family.

The chain is Sugar fermentation stimulation protein homolog from Methanococcoides burtonii (strain DSM 6242 / NBRC 107633 / OCM 468 / ACE-M).